The chain runs to 558 residues: Polypeptide N-acetylgalactosaminyltransferase 16 (558 aa).

Residues 1 to 6 (MRKIRA) are Cytoplasmic-facing. Residues 7–26 (NAIAILTVAWILGTFYYLWQ) traverse the membrane as a helical; Signal-anchor for type II membrane protein segment. Residues 27–558 (DNRAHAASSS…AQQWQLLPHT (532 aa)) are Lumenal-facing. Low complexity predominate over residues 34-46 (SSSGRGAQRAGGR). The tract at residues 34–53 (SSSGRGAQRAGGRPEQLRED) is disordered. Disulfide bonds link cysteine 113–cysteine 340, cysteine 331–cysteine 409, cysteine 441–cysteine 460, cysteine 486–cysteine 506, and cysteine 530–cysteine 543. The interval 122–227 (LPATSVIITF…VEWLQPMLQR (106 aa)) is catalytic subdomain A. Aspartate 163 and arginine 188 together coordinate substrate. Aspartate 211 serves as a coordination point for Mn(2+). Serine 212 contacts substrate. Histidine 213 is a binding site for Mn(2+). The interval 286–348 (PIRTPVIAGG…PCSRVGHVFR (63 aa)) is catalytic subdomain B. Tryptophan 317 is a binding site for substrate. Histidine 345 is a binding site for Mn(2+). Positions 348, 351, and 353 each coordinate substrate. Residues 428 to 555 (KEVLPGVIKQ…DAQAQQWQLL (128 aa)) form the Ricin B-type lectin domain.

This sequence belongs to the glycosyltransferase 2 family. GalNAc-T subfamily. The cofactor is Mn(2+). As to expression, in the CNS, it is predominantly expressed in several distinct hypothalamic, thalamic and amygdaloid nuclei. The most abundant level of expression is in the paraventricular, ventromedial and arcuate nuclei of the hypothalamus, the anterodorsal and parafascicular nuclei of the thalamus and the central, basomedial and medial nuclei of the amygdala. Also expressed in cerebral cortex, lateral septum, habenula and hippocampus.

The protein localises to the golgi apparatus membrane. It carries out the reaction L-seryl-[protein] + UDP-N-acetyl-alpha-D-galactosamine = a 3-O-[N-acetyl-alpha-D-galactosaminyl]-L-seryl-[protein] + UDP + H(+). The catalysed reaction is L-threonyl-[protein] + UDP-N-acetyl-alpha-D-galactosamine = a 3-O-[N-acetyl-alpha-D-galactosaminyl]-L-threonyl-[protein] + UDP + H(+). It functions in the pathway protein modification; protein glycosylation. Catalyzes the initial reaction in O-linked oligosaccharide biosynthesis, the transfer of an N-acetyl-D-galactosamine residue to a serine or threonine residue on the protein receptor. The protein is Polypeptide N-acetylgalactosaminyltransferase 16 (Galnt16) of Mus musculus (Mouse).